A 370-amino-acid chain; its full sequence is Seipin (370 aa).

The first 18 residues, 1-18 (MNILLRLIVFALDPLGLG), serve as a signal peptide directing secretion. Over 19 to 55 (RRFLIRPAVNLGWNVYDRVRSKADEKVGTVRELVLRL) the chain is Cytoplasmic. The helical transmembrane segment at 56 to 76 (GLIAFAVVLIIWLAVFMYAAF) threads the bilayer. Over 77-251 (YYVYMPAISH…GLRYIMFNWP (175 aa)) the chain is Lumenal. Residues 252–272 (VLSAIVAISTNLFFILVVFLL) traverse the membrane as a helical segment. Over 273–370 (SWYHWSDAKW…RPTKKTTADH (98 aa)) the chain is Cytoplasmic. The segment at 346–370 (KSRSGKRESPDALRKRPTKKTTADH) is disordered. Positions 350-359 (GKRESPDALR) are enriched in basic and acidic residues.

Widely expressed, with highest levels detected in fat body, moderate levels detected in salivary gland, midgut and muscle, and weak expression detected in brain.

The protein localises to the endoplasmic reticulum membrane. It localises to the lipid droplet. Its function is as follows. Acts as a tissue-autonomous lipid modulator, preventing ectopic lipid accumulation in salivary gland (a non-adipose tissue) and in promoting lipid storage in fat tissue. Required for the growth and maturation of small nascent lipid droplets (LDs) into larger mature LDs. In Drosophila melanogaster (Fruit fly), this protein is Seipin.